The sequence spans 440 residues: Xylose isomerase (440 aa).

Catalysis depends on residues H100 and D103. Residues E231, E267, H270, D295, D306, D308, and D338 each contribute to the Mg(2+) site.

Belongs to the xylose isomerase family. In terms of assembly, homotetramer. The cofactor is Mg(2+).

It is found in the cytoplasm. The enzyme catalyses alpha-D-xylose = alpha-D-xylulofuranose. The protein is Xylose isomerase of Paraburkholderia xenovorans (strain LB400).